The primary structure comprises 280 residues: Acetyl-coenzyme A carboxylase carboxyl transferase subunit beta (280 aa).

A CoA carboxyltransferase N-terminal domain is found at 24 to 280 (AWIKCDKCKN…IYTLIRHTHG (257 aa)). 4 residues coordinate Zn(2+): C28, C31, C47, and C50. The segment at 28–50 (CDKCKNILYIEDLLKNLKICPHC) adopts a C4-type zinc-finger fold.

The protein belongs to the AccD/PCCB family. As to quaternary structure, acetyl-CoA carboxylase is a heterohexamer composed of biotin carboxyl carrier protein (AccB), biotin carboxylase (AccC) and two subunits each of ACCase subunit alpha (AccA) and ACCase subunit beta (AccD). Zn(2+) serves as cofactor.

Its subcellular location is the cytoplasm. The enzyme catalyses N(6)-carboxybiotinyl-L-lysyl-[protein] + acetyl-CoA = N(6)-biotinyl-L-lysyl-[protein] + malonyl-CoA. It functions in the pathway lipid metabolism; malonyl-CoA biosynthesis; malonyl-CoA from acetyl-CoA: step 1/1. Component of the acetyl coenzyme A carboxylase (ACC) complex. Biotin carboxylase (BC) catalyzes the carboxylation of biotin on its carrier protein (BCCP) and then the CO(2) group is transferred by the transcarboxylase to acetyl-CoA to form malonyl-CoA. The chain is Acetyl-coenzyme A carboxylase carboxyl transferase subunit beta from Sulfurihydrogenibium sp. (strain YO3AOP1).